The following is a 417-amino-acid chain: Serine/threonine transporter SstT (417 aa).

8 consecutive transmembrane segments (helical) span residues 21-41 (ILAG…VAKM), 49-69 (FISA…MASI), 83-103 (ILVL…VASF), 142-162 (ALIN…GLAL), 193-213 (IGIF…ALAG), 218-238 (LLVL…LIVF), 291-311 (IPLG…ILTL), and 331-351 (LVAA…LLLI).

The protein belongs to the dicarboxylate/amino acid:cation symporter (DAACS) (TC 2.A.23) family.

It is found in the cell inner membrane. The catalysed reaction is L-serine(in) + Na(+)(in) = L-serine(out) + Na(+)(out). It catalyses the reaction L-threonine(in) + Na(+)(in) = L-threonine(out) + Na(+)(out). Functionally, involved in the import of serine and threonine into the cell, with the concomitant import of sodium (symport system). In Proteus mirabilis (strain HI4320), this protein is Serine/threonine transporter SstT.